The chain runs to 80 residues: Cell division protein ZapB (80 aa).

Residues 3–80 are a coiled coil; the sequence is FEVLEQLEAK…NLLGKMDDVE (78 aa).

The protein belongs to the ZapB family. As to quaternary structure, homodimer. The ends of the coiled-coil dimer bind to each other, forming polymers. Interacts with FtsZ.

The protein resides in the cytoplasm. Non-essential, abundant cell division factor that is required for proper Z-ring formation. It is recruited early to the divisome by direct interaction with FtsZ, stimulating Z-ring assembly and thereby promoting cell division earlier in the cell cycle. Its recruitment to the Z-ring requires functional FtsA or ZipA. In Vibrio atlanticus (strain LGP32) (Vibrio splendidus (strain Mel32)), this protein is Cell division protein ZapB.